Here is a 2042-residue protein sequence, read N- to C-terminus: Protein mini spindles (2042 aa).

TOG regions lie at residues 1–229 (MAED…VEPS) and 267–505 (MDLL…KVAG). The interval 1–505 (MAEDTEYKKL…KAEIKIKVAG (505 aa)) is binds tubulin. 2 promotes microtubule polymerization regions span residues 1–516 (MAED…ASAP) and 581–1080 (TPEE…EKAR). HEAT repeat units follow at residues 120 to 157 (EKQE…EFGH), 160 to 197 (IGVK…WIGA), 270 to 311 (LDPV…DHPK), 315 to 353 (GEYG…GLAK), 357 to 394 (NYAS…STSL), 396 to 433 (AQQE…TALN), and 440 to 478 (LTTS…VTPL). Residues 498-821 (EIKIKVAGPK…PKPVRGVQRS (324 aa)) form an association with microtubule lattice region. Residues 506 to 572 (PKKETRPASA…PTAALKAGGK (67 aa)) are disordered. The segment covering 513-531 (ASAPTAKAAAPAKTVAGSV) has biased composition (low complexity). Residues 581-814 (TPEELQEKSE…KNVGEKPPKP (234 aa)) form a TOG 3 region. 4 HEAT repeats span residues 587-624 (EKSE…SGFD), 625-662 (AKQA…IIRS), 672-710 (TTVD…LEYV), and 745-782 (LQPK…YMGK). The disordered stretch occupies residues 804–849 (DKNVGEKPPKPVRGVQRSSGGTAGNSPDNEDDDGGAAGEEEPINMA). Over residues 819-830 (QRSSGGTAGNSP) the composition is skewed to polar residues. A compositionally biased stretch (acidic residues) spans 831-845 (DNEDDDGGAAGEEEP). TOG regions lie at residues 849–1087 (ADLL…PVKP) and 1179–1415 (TELL…KPTP). HEAT repeat units follow at residues 856 to 893 (DIAP…EARL), 896 to 933 (PSIG…AMGA), 937 to 974 (NHVR…KGGY), and 1017 to 1054 (EDIH…HLGF). The disordered stretch occupies residues 1083-1140 (LPVKPLPKGKHQAPIPEEPKLKTVRGGGAGGAPGIQKSATARVAGGQDKQVPARKKDE). Positions 1099-1428 (EEPKLKTVRG…VDVPAPQRHD (330 aa)) are association with microtubule lattice. HEAT repeat units lie at residues 1205-1242 (RYHL…RFYD), 1272-1309 (NEGS…VFPF), 1311-1344 (KVFG…SYGM), and 1346-1383 (ICPQ…LSGE). Disordered regions lie at residues 1407–1455 (AKKT…TFDQ) and 1940–1959 (NAGS…NGPD). Residues 1940 to 1957 (NAGSTQDNRTDVNYQNNG) show a composition bias toward polar residues.

The protein belongs to the TOG/XMAP215 family. As to quaternary structure, interacts with tacc, dgt6. Interacts with mv. Interacts with Patronin.

It localises to the cytoplasm. Its subcellular location is the cytoskeleton. It is found in the microtubule organizing center. The protein resides in the centrosome. The protein localises to the spindle. It localises to the perinuclear region. In terms of biological role, binds to the plus end of microtubules and regulates microtubule dynamics and microtubule organization. Function in neurons is essential for adult survival, and is important for climbing behavior and activity. Promotes cytoplasmic microtubule nucleation and elongation. May act as a microtubule antipause factor that rapidly catalyzes the transition from pause to either growth or shrinkage. Involved in mitotic spindle elongation. Involved in the establishment of cell polarity and mitotic spindle orientation in neuroblasts. Required for maintaining the bipolarity of acentrosomal meiotic spindles; the function is dependent on tacc and involves ncd. Involved in oocyte microtubule cytoskeleton organization and bicoid mRNA localization. Seems to be involved in elongation of kinetochore-derived microtubule fibers. In fat body cells, essential component of perinuclear non-centrosomal microtubule-organizing centers (ncMTOCs) which function to accommodate the organization of microtubule (MT) networks to control nuclear positioning and dynein motor-based retrograde endosomal trafficking. Within the ncMTOCs, Msp300 and shot anchors the ncMTOC at the nuclear surface and recruits the MT minus-end regulators Patronin and Nin for assembly, anchoring and/or stabilization of circumferential and radial MTs at the ncMTOCs. Patronin, and perhaps Nin, then recruits msps to the ncMTOC where it is required for the gamma-tubulin-independent elongation and assembly of radial MTs. This is Protein mini spindles (msps) from Drosophila melanogaster (Fruit fly).